We begin with the raw amino-acid sequence, 94 residues long: Cyclin-dependent kinases regulatory subunit (94 aa).

Belongs to the CKS family. Forms a homohexamer that can probably bind six kinase subunits. Interacts with cdk-1.

The protein resides in the nucleus. Its function is as follows. Binds to the catalytic subunit of the cyclin dependent kinases and is essential for their biological function. Has a role in the exit from M phase during early mitotic cell division. More specifically, thought to act by the degrading B-type cyclins that causes breakdown of nuclear envelope and exit mitosis. This chain is Cyclin-dependent kinases regulatory subunit, found in Caenorhabditis briggsae.